The sequence spans 891 residues: Alanine--tRNA ligase (891 aa).

Zn(2+) contacts are provided by histidine 564, histidine 568, cysteine 681, and histidine 685.

It belongs to the class-II aminoacyl-tRNA synthetase family. Requires Zn(2+) as cofactor.

Its subcellular location is the cytoplasm. It catalyses the reaction tRNA(Ala) + L-alanine + ATP = L-alanyl-tRNA(Ala) + AMP + diphosphate. Catalyzes the attachment of alanine to tRNA(Ala) in a two-step reaction: alanine is first activated by ATP to form Ala-AMP and then transferred to the acceptor end of tRNA(Ala). Also edits incorrectly charged Ser-tRNA(Ala) and Gly-tRNA(Ala) via its editing domain. The chain is Alanine--tRNA ligase from Methylorubrum populi (strain ATCC BAA-705 / NCIMB 13946 / BJ001) (Methylobacterium populi).